Here is a 438-residue protein sequence, read N- to C-terminus: uncharacterized protein (438 aa).

2 disordered regions span residues 1 to 22 (MRDNTAKGITAGSGSQQTTYDP) and 156 to 264 (DTAK…PWRP). Positions 156–170 (DTAKSNEKLQGDESK) are enriched in basic and acidic residues. Positions 171-189 (SSNGSSSTSTTTQRGSTNS) are enriched in low complexity. The span at 191–206 (TKVKALKIEVKKKSDS) shows a compositional bias: basic and acidic residues.

Belongs to the adhesin P1 family.

This is an uncharacterized protein from Mycoplasma pneumoniae (strain ATCC 29342 / M129 / Subtype 1) (Mycoplasmoides pneumoniae).